Here is a 616-residue protein sequence, read N- to C-terminus: ATP-dependent RNA helicase VAD1 (616 aa).

A disordered region spans residues methionine 1–glycine 35. Positions serine 36–glutamate 64 match the Q motif motif. Residues isoleucine 67–isoleucine 238 form the Helicase ATP-binding domain. ATP is bound at residue alanine 80–threonine 87. The DEAD box motif lies at aspartate 186–aspartate 189. In terms of domain architecture, Helicase C-terminal spans glycine 248–leucine 408. A disordered region spans residues glutamate 416–alanine 616. Low complexity-rich tracts occupy residues alanine 427–arginine 441, proline 458–proline 500, and tyrosine 508–glutamine 523. The span at proline 529–threonine 545 shows a compositional bias: polar residues. Composition is skewed to low complexity over residues proline 550–glycine 579 and alanine 606–alanine 616.

Belongs to the DEAD box helicase family. DDX6/DHH1 subfamily.

It is found in the cytoplasm. Its subcellular location is the P-body. The enzyme catalyses ATP + H2O = ADP + phosphate + H(+). In terms of biological role, ATP-dependent RNA helicase involved in mRNA turnover, and more specifically in mRNA decapping. Is involved in G1/S DNA-damage checkpoint recovery, probably through the regulation of the translational status of a subset of mRNAs. May also have a role in translation and mRNA nuclear export. Blocks autophagy in nutrient-rich conditions by, at least partly, binding and repressing the expression of a set of ATG genes, including ATG3, ATG7, ATG8, ATG19, ATG20 and ATG22. VAD1-mediated repression of autophagy is regulated by TOR-dependent phosphorylation of the decapping enzyme DCP2. Regulates multiple virulence-associated genes. Repression of autophagy by VAD1 also regulates the pathogenesis. This is ATP-dependent RNA helicase VAD1 from Cryptococcus neoformans var. grubii serotype A (strain H99 / ATCC 208821 / CBS 10515 / FGSC 9487) (Filobasidiella neoformans var. grubii).